The sequence spans 158 residues: Disulfide bond formation protein B (158 aa).

At 1 to 7 the chain is on the cytoplasmic side; the sequence is MKNSRPV. Residues 8-24 form a helical membrane-spanning segment; sequence LFAVALASLLLLAVALY. Over 25–42 the chain is Periplasmic; sequence LQHVENMLPCPLCVIQRY. C34 and C37 are joined by a disulfide. Residues 43 to 57 form a helical membrane-spanning segment; it reads AFAAIALICLVTAFR. Residues 58–63 are Cytoplasmic-facing; that stretch reads TEVTAR. A helical transmembrane segment spans residues 64–81; that stretch reads IGAALAALASLAGAGVAG. Residues 82 to 136 lie on the Periplasmic side of the membrane; it reads WHIYIKAHPTVSCGIDPLETSLNTIPTAKLLPFLLQADGLCTTEYAPIMGLSIPQ. C94 and C122 are joined by a disulfide. A helical membrane pass occupies residues 137-155; it reads WALVWFIVIALFLLHTAFR. The Cytoplasmic portion of the chain corresponds to 156–158; it reads KKS.

Belongs to the DsbB family.

It localises to the cell inner membrane. Its function is as follows. Required for disulfide bond formation in some periplasmic proteins. Acts by oxidizing the DsbA protein. The protein is Disulfide bond formation protein B of Herminiimonas arsenicoxydans.